The primary structure comprises 161 residues: Vitamin K-dependent protein C (161 aa).

Residues 1–161 form the Peptidase S1 domain; that stretch reads EKWELDLDIE…GCGLLHNYGV (161 aa). N-linked (GlcNAc...) asparagine glycosylation is present at N17. D26 acts as the Charge relay system in catalysis. The N-linked (GlcNAc...) asparagine glycan is linked to N82. 2 cysteine pairs are disulfide-bonded: C100–C114 and C125–C153. The Charge relay system role is filled by S129.

It belongs to the peptidase S1 family. In terms of tissue distribution, plasma; synthesized in the liver.

It is found in the secreted. Its subcellular location is the golgi apparatus. The protein resides in the endoplasmic reticulum. It carries out the reaction Degradation of blood coagulation factors Va and VIIIa.. Its function is as follows. Protein C is a vitamin K-dependent serine protease that regulates blood coagulation by inactivating factors Va and VIIIa in the presence of calcium ions and phospholipids. Exerts a protective effect on the endothelial cell barrier function. This Macaca mulatta (Rhesus macaque) protein is Vitamin K-dependent protein C (PROC).